Here is a 219-residue protein sequence, read N- to C-terminus: Protein GrpE (219 aa).

Disordered regions lie at residues 1 to 32 (MSTT…LDAT) and 59 to 87 (FDGV…AERT).

The protein belongs to the GrpE family. In terms of assembly, homodimer.

Its subcellular location is the cytoplasm. Its function is as follows. Participates actively in the response to hyperosmotic and heat shock by preventing the aggregation of stress-denatured proteins, in association with DnaK and GrpE. It is the nucleotide exchange factor for DnaK and may function as a thermosensor. Unfolded proteins bind initially to DnaJ; upon interaction with the DnaJ-bound protein, DnaK hydrolyzes its bound ATP, resulting in the formation of a stable complex. GrpE releases ADP from DnaK; ATP binding to DnaK triggers the release of the substrate protein, thus completing the reaction cycle. Several rounds of ATP-dependent interactions between DnaJ, DnaK and GrpE are required for fully efficient folding. In Corynebacterium diphtheriae (strain ATCC 700971 / NCTC 13129 / Biotype gravis), this protein is Protein GrpE.